We begin with the raw amino-acid sequence, 293 residues long: Bifunctional protein FolD (293 aa).

Residues glycine 164–serine 166, serine 193, and threonine 234 contribute to the NADP(+) site.

The protein belongs to the tetrahydrofolate dehydrogenase/cyclohydrolase family. Homodimer.

The catalysed reaction is (6R)-5,10-methylene-5,6,7,8-tetrahydrofolate + NADP(+) = (6R)-5,10-methenyltetrahydrofolate + NADPH. It carries out the reaction (6R)-5,10-methenyltetrahydrofolate + H2O = (6R)-10-formyltetrahydrofolate + H(+). Its pathway is one-carbon metabolism; tetrahydrofolate interconversion. In terms of biological role, catalyzes the oxidation of 5,10-methylenetetrahydrofolate to 5,10-methenyltetrahydrofolate and then the hydrolysis of 5,10-methenyltetrahydrofolate to 10-formyltetrahydrofolate. This is Bifunctional protein FolD from Bacteroides thetaiotaomicron (strain ATCC 29148 / DSM 2079 / JCM 5827 / CCUG 10774 / NCTC 10582 / VPI-5482 / E50).